The primary structure comprises 212 residues: Thymidylate kinase (212 aa).

Residue 9 to 16 (GIDGCGKT) coordinates ATP.

This sequence belongs to the thymidylate kinase family.

The enzyme catalyses dTMP + ATP = dTDP + ADP. Its function is as follows. Phosphorylation of dTMP to form dTDP in both de novo and salvage pathways of dTTP synthesis. The protein is Thymidylate kinase of Synechococcus sp. (strain CC9311).